The following is a 137-amino-acid chain: DNA-directed RNA polymerase subunit omega (137 aa).

Residues 78 to 137 are disordered; the sequence is DEPEPEAVPLLSSSPAAAAVAPQAASGDDNDIQFDRMSEEDLLRGLENLAPPTETEDEGD. Low complexity predominate over residues 84–103; it reads AVPLLSSSPAAAAVAPQAAS. Over residues 110–121 the composition is skewed to basic and acidic residues; sequence QFDRMSEEDLLR.

It belongs to the RNA polymerase subunit omega family. In terms of assembly, the RNAP catalytic core consists of 2 alpha, 1 beta, 1 beta' and 1 omega subunit. When a sigma factor is associated with the core the holoenzyme is formed, which can initiate transcription.

The enzyme catalyses RNA(n) + a ribonucleoside 5'-triphosphate = RNA(n+1) + diphosphate. In terms of biological role, promotes RNA polymerase assembly. Latches the N- and C-terminal regions of the beta' subunit thereby facilitating its interaction with the beta and alpha subunits. The chain is DNA-directed RNA polymerase subunit omega from Methylobacterium sp. (strain 4-46).